The sequence spans 339 residues: Glucokinase (339 aa).

16 to 21 (GDIGGT) contributes to the ATP binding site.

It belongs to the bacterial glucokinase family.

It is found in the cytoplasm. The enzyme catalyses D-glucose + ATP = D-glucose 6-phosphate + ADP + H(+). The protein is Glucokinase of Sinorhizobium fredii (strain NBRC 101917 / NGR234).